We begin with the raw amino-acid sequence, 506 residues long: 2-isopropylmalate synthase (506 aa).

Residues 8-272 (LIVFDTTLRD…ETGIQLKEIL (265 aa)) enclose the Pyruvate carboxyltransferase domain. Asp17, His206, His208, and Asn242 together coordinate Mn(2+). The segment at 396–506 (ELEYVAVTVC…YLNAVNKALL (111 aa)) is regulatory domain.

It belongs to the alpha-IPM synthase/homocitrate synthase family. LeuA type 1 subfamily. In terms of assembly, homodimer. Mn(2+) serves as cofactor.

It is found in the cytoplasm. The catalysed reaction is 3-methyl-2-oxobutanoate + acetyl-CoA + H2O = (2S)-2-isopropylmalate + CoA + H(+). It participates in amino-acid biosynthesis; L-leucine biosynthesis; L-leucine from 3-methyl-2-oxobutanoate: step 1/4. Catalyzes the condensation of the acetyl group of acetyl-CoA with 3-methyl-2-oxobutanoate (2-ketoisovalerate) to form 3-carboxy-3-hydroxy-4-methylpentanoate (2-isopropylmalate). The sequence is that of 2-isopropylmalate synthase from Methylacidiphilum infernorum (isolate V4) (Methylokorus infernorum (strain V4)).